The chain runs to 312 residues: Epoxyqueuosine reductase (312 aa).

Residue D132 is the Proton donor of the active site. In terms of domain architecture, 4Fe-4S ferredoxin-type 1 spans 174–206; the sequence is EVLEADKPSKPICGECEKCIEACPTKAIEEPFI. Positions 186, 189, 192, 196, 212, 240, 243, and 247 each coordinate [4Fe-4S] cluster. A 4Fe-4S ferredoxin-type 2 domain is found at 226-257; it reads PENIINKMGNWIAGCDICQDVCPWNQKHIPST.

The protein belongs to the QueG family. As to quaternary structure, monomer. The cofactor is cob(II)alamin. [4Fe-4S] cluster serves as cofactor.

It localises to the cytoplasm. It catalyses the reaction epoxyqueuosine(34) in tRNA + AH2 = queuosine(34) in tRNA + A + H2O. Its pathway is tRNA modification; tRNA-queuosine biosynthesis. Functionally, catalyzes the conversion of epoxyqueuosine (oQ) to queuosine (Q), which is a hypermodified base found in the wobble positions of tRNA(Asp), tRNA(Asn), tRNA(His) and tRNA(Tyr). This Prochlorococcus marinus (strain NATL2A) protein is Epoxyqueuosine reductase.